Reading from the N-terminus, the 593-residue chain is Metal-response element-binding transcription factor 2 (593 aa).

Positions Met1–Asp35 are disordered. Residues Val12–Gln22 show a composition bias toward basic residues. Residues Lys23–Ser32 are compositionally biased toward polar residues. Thr24 carries the post-translational modification Phosphothreonine. Residues Cys44–Gly101 form the Tudor domain. 2 consecutive PHD-type zinc fingers follow at residues Glu102–Ala157 and Gln201–Gly255. Residue Lys360 forms a Glycyl lysine isopeptide (Lys-Gly) (interchain with G-Cter in SUMO2) linkage. Positions Lys360 to Ile374 are enriched in basic and acidic residues. Disordered regions lie at residues Lys360 to Arg411 and Lys424 to Gly486. A compositionally biased stretch (polar residues) spans Thr445–Val454. At Ser452 the chain carries Phosphoserine. A compositionally biased stretch (low complexity) spans Ala459–Ser471. A Glycyl lysine isopeptide (Lys-Gly) (interchain with G-Cter in SUMO2) cross-link involves residue Lys522.

The protein belongs to the Polycomblike family. In terms of assembly, associates with the PRC2 complex, which consists of the core components EED, EZH1 or EZH2, SUZ12, and RBBP4, and various combinations of accessory subunits including AEBP2, JARID2, PHF19, MTF2 and EPOP. Forms a dimeric PRC2.1 (class 1, PRC-PCL) complex consisting of at least SUZ12, RBBP4, and PHF19 or MTF2; PHF19 and MTF2 stabilize the dimeric structure which enhances PRC2 interaction with chromatin.

It is found in the nucleus. Functionally, polycomb group (PcG) protein that specifically binds histone H3 trimethylated at 'Lys-36' (H3K36me3) and recruits the PRC2 complex, thus enhancing PRC2 H3K27me3 methylation activity. Regulates the transcriptional networks during embryonic stem cell self-renewal and differentiation. Promotes recruitment of the PRC2 complex to the inactive X chromosome in differentiating XX ES cells and PRC2 recruitment to target genes in undifferentiated ES cells. Required to repress Hox genes by enhancing H3K27me3 methylation of the PRC2 complex. In some conditions may act as an inhibitor of PRC2 activity: able to activate the CDKN2A gene and promote cellular senescence by suppressing the catalytic activity of the PRC2 complex locally. Binds to the metal-regulating-element (MRE) of MT1A gene promoter. The chain is Metal-response element-binding transcription factor 2 (MTF2) from Homo sapiens (Human).